The following is a 303-amino-acid chain: D-alanine--D-alanine ligase (303 aa).

Residues 100–295 (KQLLRRHGIL…FPALIARLIE (196 aa)) form the ATP-grasp domain. 127–180 (GLGYPLFVKPNTGGSSLCLSRVTQPEGLAPALEAVFAHCGEAIVEPAIPGVEVT) contacts ATP. Mg(2+) contacts are provided by D249, E262, and N264.

The protein belongs to the D-alanine--D-alanine ligase family. It depends on Mg(2+) as a cofactor. The cofactor is Mn(2+).

It is found in the cytoplasm. The enzyme catalyses 2 D-alanine + ATP = D-alanyl-D-alanine + ADP + phosphate + H(+). The protein operates within cell wall biogenesis; peptidoglycan biosynthesis. Functionally, cell wall formation. In Nitratidesulfovibrio vulgaris (strain DP4) (Desulfovibrio vulgaris), this protein is D-alanine--D-alanine ligase.